The sequence spans 333 residues: Uroporphyrinogen decarboxylase (333 aa).

Residues 21 to 25 (RQVGR), Asp-70, Tyr-139, Ser-194, and His-309 contribute to the substrate site.

Belongs to the uroporphyrinogen decarboxylase family. Homodimer.

Its subcellular location is the cytoplasm. It catalyses the reaction uroporphyrinogen III + 4 H(+) = coproporphyrinogen III + 4 CO2. Its pathway is porphyrin-containing compound metabolism; protoporphyrin-IX biosynthesis; coproporphyrinogen-III from 5-aminolevulinate: step 4/4. Catalyzes the decarboxylation of four acetate groups of uroporphyrinogen-III to yield coproporphyrinogen-III. This is Uroporphyrinogen decarboxylase from Chlamydia abortus (strain DSM 27085 / S26/3) (Chlamydophila abortus).